The chain runs to 146 residues: VEWTDFERATIQDIFSKMDYETVGPATLTRTVIVYPWTLRYFAKFGNICSTAAILGNKEIAKHGTTILHGLDRGVKNMDDIKNTYAELSKLHSEKLHVDPDNFRLLSDCLTIVVAAKMGKDFTGEVQAAFQKFLSVVVNSLGRQYH.

Positions 2–146 (EWTDFERATI…VVNSLGRQYH (145 aa)) constitute a Globin domain. 2 residues coordinate heme b: histidine 63 and histidine 92.

This sequence belongs to the globin family. In terms of assembly, heterotetramer of two alpha chains and two beta chains. Can form polymers. As to expression, red blood cells.

Involved in oxygen transport from gills to the various peripheral tissues. The sequence is that of Hemoglobin subunit beta (hbb) from Chelidonichthys kumu (Bluefin gurnard).